A 425-amino-acid chain; its full sequence is Argininosuccinate synthase (425 aa).

ATP contacts are provided by residues 7–15 and Ala-33; that span reads AYSGGLDTS. Residue Tyr-84 coordinates L-citrulline. Gly-114 contributes to the ATP binding site. L-aspartate contacts are provided by Thr-116, Asn-120, and Asp-121. An L-citrulline-binding site is contributed by Asn-120. L-citrulline-binding residues include Arg-124, Ser-177, Ser-186, Glu-267, and Tyr-279.

The protein belongs to the argininosuccinate synthase family. Type 1 subfamily. As to quaternary structure, homotetramer.

The protein localises to the cytoplasm. It catalyses the reaction L-citrulline + L-aspartate + ATP = 2-(N(omega)-L-arginino)succinate + AMP + diphosphate + H(+). Its pathway is amino-acid biosynthesis; L-arginine biosynthesis; L-arginine from L-ornithine and carbamoyl phosphate: step 2/3. The protein is Argininosuccinate synthase of Pseudothermotoga lettingae (strain ATCC BAA-301 / DSM 14385 / NBRC 107922 / TMO) (Thermotoga lettingae).